A 355-amino-acid chain; its full sequence is Trans-3-hydroxy-L-proline dehydratase (355 aa).

Cys-111 serves as the catalytic Proton acceptor. Residues 112–113 and 276–277 contribute to the substrate site; these read GH and GS.

The protein belongs to the proline racemase family. Homodimer.

The catalysed reaction is trans-3-hydroxy-L-proline = 1-pyrroline-2-carboxylate + H2O. Its function is as follows. Catalyzes the dehydration of trans-3-hydroxy-L-proline (t3LHyp) to Delta(1)-pyrroline-2-carboxylate (Pyr2C). Together with LhpI, is involved in a metabolic pathway that converts t3LHyp to L-proline. This chain is Trans-3-hydroxy-L-proline dehydratase, found in Colwellia psychrerythraea (strain 34H / ATCC BAA-681) (Vibrio psychroerythus).